Consider the following 169-residue polypeptide: MATSSAVLFFLLAVFAAGASAATFRITNNCGFTVWPAGIPVGGGFQLNSKQSSNINVPAGTSAGRIWGRTGCSFNNGRGSCATGDCAGALSCTLSGQPATLAEYTIGGSQDFYDISVIDGYNLAMDFSCSTGVALKCRDANCPDAYHHPNDVATHACNGNSNYQITFCP.

The first 21 residues, 1 to 21 (MATSSAVLFFLLAVFAAGASA), serve as a signal peptide directing secretion.

The protein belongs to the thaumatin family.

Its function is as follows. Associated with resistance against stem rust fungi. The protein is Thaumatin-like pathogenesis-related protein 2 (RASTL-2) of Avena sativa (Oat).